A 615-amino-acid polypeptide reads, in one-letter code: NEDD8 ultimate buster 1 (615 aa).

2 coiled-coil regions span residues 36-70 (LALK…AIER) and 152-203 (KAMV…AAET). 3 consecutive UBA domains span residues 374–413 (YIDP…HITN), 424–470 (EEKE…LLSN), and 489–529 (SPSQ…LAHN). A Nuclear localization signal motif is present at residues 414–431 (RREELAQIRKEEKEKKRR). An NEDD8-binding 1 region spans residues 427-474 (EKKRRRLENIRFLKGMGYSTHAAQQVLHAASGNLDEALKILLSNPQMW). The segment at 532 to 586 (SLPPELPLSPEDSLSPPATSPSDSAGTSSASTDEDMETEAVNEILEDIPEHEEDY) is disordered. Residues 539-562 (LSPEDSLSPPATSPSDSAGTSSAS) are compositionally biased toward low complexity. Residues 550–598 (TSPSDSAGTSSASTDEDMETEAVNEILEDIPEHEEDYLDSTLEDEEIII) are NEDD8-binding 2. Over residues 563–586 (TDEDMETEAVNEILEDIPEHEEDY) the composition is skewed to acidic residues.

In terms of assembly, directly interacts with NEDD8 and PSMD4/S5a, a member of the regulatory subunit of the 26S proteasome. Isoform 1 binds to NEDD8 more efficiently than isoform 2. Interacts with AIPL1. The interaction with UBD via UBA domains facilitates the linking of UBD-conjugated target protein to the proteasome complex and accelerates UBD degradation and that of its conjugates. In terms of tissue distribution, widely expressed with lowest expression in the pancreas for isoform 1 and in leukocytes, liver, prostate and skeletal muscle for isoform 2.

It is found in the nucleus. Its function is as follows. Specific down-regulator of the NEDD8 conjugation system. Recruits NEDD8, UBD, and their conjugates to the proteasome for degradation. Isoform 1 promotes the degradation of NEDD8 more efficiently than isoform 2. The protein is NEDD8 ultimate buster 1 (NUB1) of Homo sapiens (Human).